Consider the following 414-residue polypeptide: WW domain-containing oxidoreductase (414 aa).

Residues M1 to E23 are disordered. At T12 the chain carries Phosphothreonine. S14 is subject to Phosphoserine. A WW 1 domain is found at D16 to T49. Y33 carries the post-translational modification Phosphotyrosine. The Nuclear localization signal signature appears at G50 to V55. The WW 2 domain maps to G57–L90. The tract at residues K125–G414 is interaction with MAPT. Residue G131 to G137 coordinates NADP(+). The tract at residues C209–G273 is mediates targeting to the mitochondria. S260 is a substrate binding site. Y287 carries the post-translational modification Phosphotyrosine; by TNK2. Y293 serves as the catalytic Proton acceptor.

It belongs to the short-chain dehydrogenases/reductases (SDR) family. As to quaternary structure, interacts with TP53, p73/TP73 and MAPK8. Interacts with MAPT/TAU, RUNX2 and HYAL2. Forms a ternary complex with TP53 and MDM2. Interacts with ERBB4, LITAF and WBP1. Interacts with DVL1, DVL2 and DVL3. May interact with FAM189B and SCOTIN. Interacts with TNK2. Interacts with TMEM207. Interacts (via WW domain) with VOPP1. Post-translationally, phosphorylated upon genotoxic stress. Phosphorylation of Tyr-33 regulates interaction with TP53, TP73 and MAPK8. May also regulate proapoptotic activity. Phosphorylation by TNK2 is associated with polyubiquitination and degradation. In terms of processing, ubiquitinated when phosphorylated by TNK2, leading to its degradation. As to expression, widely expressed. Strongly expressed in testis, prostate, and ovary. Overexpressed in cancer cell lines. Isoform 5 and isoform 6 may only be expressed in tumor cell lines.

The protein localises to the cytoplasm. The protein resides in the nucleus. Its subcellular location is the mitochondrion. It localises to the golgi apparatus. It is found in the lysosome. Putative oxidoreductase. Acts as a tumor suppressor and plays a role in apoptosis. Required for normal bone development. May function synergistically with p53/TP53 to control genotoxic stress-induced cell death. Plays a role in TGFB1 signaling and TGFB1-mediated cell death. May also play a role in tumor necrosis factor (TNF)-mediated cell death. Inhibits Wnt signaling, probably by sequestering DVL2 in the cytoplasm. The protein is WW domain-containing oxidoreductase (WWOX) of Homo sapiens (Human).